The sequence spans 79 residues: Conotoxin MIVA (79 aa).

Residues 1–21 form the signal peptide; sequence MGMRMMFTVFLLVVLATTVVS. Residues 22–38 constitute a propeptide that is removed on maturation; that stretch reads IPSDRASDGRNAVVHER. The residue at position 40 (Pro40) is a 4-hydroxyproline. Glu41 is subject to 4-carboxyglutamate. Thr45 and Thr47 each carry an O-linked (HexNAc...) threonine glycan. Pro55, Pro60, Pro61, Pro69, Pro70, and Pro74 each carry 4-hydroxyproline. At Pro74 the chain carries Proline amide. A propeptide spanning residues 75–79 is cleaved from the precursor; the sequence is GRRND.

O-linked glycan consists of Hex4-HexNAc2 hexasaccharide. In terms of processing, contains 3 disulfide bonds. Expressed by the venom duct.

It localises to the secreted. In terms of biological role, probable neurotoxin with ion channel inhibitor activity. This chain is Conotoxin MIVA, found in Conus magus (Magical cone).